The chain runs to 236 residues: ATP synthase subunit 4, mitochondrial (236 aa).

The transit peptide at 1-29 directs the protein to the mitochondrion; sequence MAFRALTTKAAARPLLALGPRSVAMGARY.

This sequence belongs to the eukaryotic ATPase subunit B family. As to quaternary structure, F-type ATPases have 2 components, CF(1) - the catalytic core - and CF(0) - the membrane proton channel. In yeast, the dimeric form of ATP synthase consists of 17 polypeptides: alpha, beta, gamma, delta, epsilon, 4 (B), 5 (OSCP), 6 (A), 8, 9 (C), d, E (Tim11), f, g, h, i/j and k.

It localises to the mitochondrion. The protein localises to the mitochondrion inner membrane. In terms of biological role, mitochondrial membrane ATP synthase (F(1)F(0) ATP synthase or Complex V) produces ATP from ADP in the presence of a proton gradient across the membrane which is generated by electron transport complexes of the respiratory chain. F-type ATPases consist of two structural domains, F(1) - containing the extramembraneous catalytic core, and F(0) - containing the membrane proton channel, linked together by a central stalk and a peripheral stalk. During catalysis, ATP synthesis in the catalytic domain of F(1) is coupled via a rotary mechanism of the central stalk subunits to proton translocation. Part of the complex F(0) domain and the peripheric stalk, which acts as a stator to hold the catalytic alpha(3)beta(3) subcomplex and subunit a/ATP6 static relative to the rotary elements. The sequence is that of ATP synthase subunit 4, mitochondrial (ATP4) from Eremothecium gossypii (strain ATCC 10895 / CBS 109.51 / FGSC 9923 / NRRL Y-1056) (Yeast).